We begin with the raw amino-acid sequence, 98 residues long: snRNA-activating protein complex subunit 5 (98 aa).

Residues 75-98 (ALELSTRSHVQEEEEEEEEEEEDS) form a disordered region. Residues 86 to 98 (EEEEEEEEEEEDS) are compositionally biased toward acidic residues.

In terms of assembly, part of the SNAPc complex composed of 5 subunits: SNAPC1, SNAPC2, SNAPC3, SNAPC4 and SNAPC5. SNAPC5 interacts with SNAPC4.

It is found in the nucleus. In terms of biological role, part of the SNAPc complex required for the transcription of both RNA polymerase II and III small-nuclear RNA genes. Binds to the proximal sequence element (PSE), a non-TATA-box basal promoter element common to these 2 types of genes. Recruits TBP and BRF2 to the U6 snRNA TATA box. This is snRNA-activating protein complex subunit 5 (SNAPC5) from Bos taurus (Bovine).